Here is a 227-residue protein sequence, read N- to C-terminus: Cytochrome c oxidase subunit 2 (227 aa).

Residues 1–14 (MAYPLQLGFQDATS) lie on the Mitochondrial intermembrane side of the membrane. A helical membrane pass occupies residues 15–45 (PVMEELLHFHDHTLMIIFLISSLVLYIIMLM). Topologically, residues 46-59 (LTTKLVHTNMMNVQ) are mitochondrial matrix. A helical transmembrane segment spans residues 60–87 (EMEMIWTILPAIILILIALPSLHTLYMM). Topologically, residues 88-227 (DEINNPLLTI…YFESWSASLA (140 aa)) are mitochondrial intermembrane. Cu cation is bound by residues His-161, Cys-196, Glu-198, Cys-200, His-204, and Met-207. Residue Glu-198 coordinates Mg(2+). The residue at position 218 (Tyr-218) is a Phosphotyrosine.

Belongs to the cytochrome c oxidase subunit 2 family. As to quaternary structure, component of the cytochrome c oxidase (complex IV, CIV), a multisubunit enzyme composed of 14 subunits. The complex is composed of a catalytic core of 3 subunits MT-CO1, MT-CO2 and MT-CO3, encoded in the mitochondrial DNA, and 11 supernumerary subunits COX4I, COX5A, COX5B, COX6A, COX6B, COX6C, COX7A, COX7B, COX7C, COX8 and NDUFA4, which are encoded in the nuclear genome. The complex exists as a monomer or a dimer and forms supercomplexes (SCs) in the inner mitochondrial membrane with NADH-ubiquinone oxidoreductase (complex I, CI) and ubiquinol-cytochrome c oxidoreductase (cytochrome b-c1 complex, complex III, CIII), resulting in different assemblies (supercomplex SCI(1)III(2)IV(1) and megacomplex MCI(2)III(2)IV(2)). Found in a complex with TMEM177, COA6, COX18, COX20, SCO1 and SCO2. Interacts with TMEM177 in a COX20-dependent manner. Interacts with COX20. Interacts with COX16. It depends on Cu cation as a cofactor.

It localises to the mitochondrion inner membrane. It catalyses the reaction 4 Fe(II)-[cytochrome c] + O2 + 8 H(+)(in) = 4 Fe(III)-[cytochrome c] + 2 H2O + 4 H(+)(out). Its function is as follows. Component of the cytochrome c oxidase, the last enzyme in the mitochondrial electron transport chain which drives oxidative phosphorylation. The respiratory chain contains 3 multisubunit complexes succinate dehydrogenase (complex II, CII), ubiquinol-cytochrome c oxidoreductase (cytochrome b-c1 complex, complex III, CIII) and cytochrome c oxidase (complex IV, CIV), that cooperate to transfer electrons derived from NADH and succinate to molecular oxygen, creating an electrochemical gradient over the inner membrane that drives transmembrane transport and the ATP synthase. Cytochrome c oxidase is the component of the respiratory chain that catalyzes the reduction of oxygen to water. Electrons originating from reduced cytochrome c in the intermembrane space (IMS) are transferred via the dinuclear copper A center (CU(A)) of subunit 2 and heme A of subunit 1 to the active site in subunit 1, a binuclear center (BNC) formed by heme A3 and copper B (CU(B)). The BNC reduces molecular oxygen to 2 water molecules using 4 electrons from cytochrome c in the IMS and 4 protons from the mitochondrial matrix. In Mammuthus primigenius (Siberian woolly mammoth), this protein is Cytochrome c oxidase subunit 2 (MT-CO2).